Here is a 328-residue protein sequence, read N- to C-terminus: Nucleotide-binding protein Blon_1085/BLIJ_1109 (328 aa).

The disordered stretch occupies residues 1 to 33 (MSQQTTIRDTGEAAATNAPANSATSTSTPDNQP). A compositionally biased stretch (low complexity) spans 13-29 (AAATNAPANSATSTSTP). 46 to 53 (GMSGAGRS) lines the ATP pocket. GTP is bound at residue 101-104 (DVRS).

It belongs to the RapZ-like family.

Functionally, displays ATPase and GTPase activities. This is Nucleotide-binding protein Blon_1085/BLIJ_1109 from Bifidobacterium longum subsp. infantis (strain ATCC 15697 / DSM 20088 / JCM 1222 / NCTC 11817 / S12).